A 206-amino-acid chain; its full sequence is Ribosomal RNA small subunit methyltransferase G (206 aa).

Residues G74, L79, 125–126 (VE), and R140 each bind S-adenosyl-L-methionine.

It belongs to the methyltransferase superfamily. RNA methyltransferase RsmG family.

Its subcellular location is the cytoplasm. The enzyme catalyses guanosine(527) in 16S rRNA + S-adenosyl-L-methionine = N(7)-methylguanosine(527) in 16S rRNA + S-adenosyl-L-homocysteine. In terms of biological role, specifically methylates the N7 position of guanine in position 527 of 16S rRNA. This is Ribosomal RNA small subunit methyltransferase G from Shewanella sp. (strain MR-7).